The sequence spans 150 residues: Nucleoside diphosphate kinase (150 aa).

Lys9, Phe57, Arg85, Thr91, Arg102, and Asn112 together coordinate ATP. His115 (pros-phosphohistidine intermediate) is an active-site residue.

It belongs to the NDK family. Homotetramer. Requires Mg(2+) as cofactor.

The protein localises to the cytoplasm. It catalyses the reaction a 2'-deoxyribonucleoside 5'-diphosphate + ATP = a 2'-deoxyribonucleoside 5'-triphosphate + ADP. It carries out the reaction a ribonucleoside 5'-diphosphate + ATP = a ribonucleoside 5'-triphosphate + ADP. Its function is as follows. Major role in the synthesis of nucleoside triphosphates other than ATP. The ATP gamma phosphate is transferred to the NDP beta phosphate via a ping-pong mechanism, using a phosphorylated active-site intermediate. This chain is Nucleoside diphosphate kinase, found in Thermosynechococcus vestitus (strain NIES-2133 / IAM M-273 / BP-1).